Consider the following 81-residue polypeptide: MKQGIHPDYHPVVFRDISADTAFLTRSTVTSSTEIKWQDGNTYPVIDVDITSASHPFYTGKAKIVDTAGRVEKFNRRYGKK.

It belongs to the bacterial ribosomal protein bL31 family. Type B subfamily. As to quaternary structure, part of the 50S ribosomal subunit.

The chain is Large ribosomal subunit protein bL31B from Cutibacterium acnes (strain DSM 16379 / KPA171202) (Propionibacterium acnes).